We begin with the raw amino-acid sequence, 312 residues long: Malate dehydrogenase (312 aa).

NAD(+)-binding positions include 7-13 (GAAGGIG) and aspartate 34. Substrate is bound by residues arginine 81 and arginine 87. Residues asparagine 94 and 117 to 119 (ITN) contribute to the NAD(+) site. Residues asparagine 119 and arginine 153 each contribute to the substrate site. Histidine 177 functions as the Proton acceptor in the catalytic mechanism. Residue methionine 227 coordinates NAD(+).

The protein belongs to the LDH/MDH superfamily. MDH type 1 family. In terms of assembly, homodimer.

The catalysed reaction is (S)-malate + NAD(+) = oxaloacetate + NADH + H(+). Its function is as follows. Catalyzes the reversible oxidation of malate to oxaloacetate. The polypeptide is Malate dehydrogenase (Escherichia coli O6:K15:H31 (strain 536 / UPEC)).